The sequence spans 408 residues: DNA polymerase processivity factor (408 aa).

The Nuclear localization signal motif lies at 344–353; that stretch reads KKRRNLLTKR.

It belongs to the herpesviridae DNA polymerase processivity factor family. Interacts with the DNA polymerase catalytic subunit. Interacts with the origin-binding protein.

It localises to the host nucleus. Its function is as follows. Plays an essential role in viral DNA replication by acting as the polymerase accessory subunit. Associates with the viral polymerase to increase its processivity and forms high-affinity direct interactions with DNA. Facilitates the origin-binding protein loading onto DNA thus increasing its ability to assemble into a functional complex capable of unwinding duplex DNA. The chain is DNA polymerase processivity factor from Varicella-zoster virus (strain Oka vaccine) (HHV-3).